A 255-amino-acid chain; its full sequence is 1-(5-phosphoribosyl)-5-[(5-phosphoribosylamino)methylideneamino] imidazole-4-carboxamide isomerase (255 aa).

Catalysis depends on Asp8, which acts as the Proton acceptor. Asp129 serves as the catalytic Proton donor.

Belongs to the HisA/HisF family.

It is found in the cytoplasm. It carries out the reaction 1-(5-phospho-beta-D-ribosyl)-5-[(5-phospho-beta-D-ribosylamino)methylideneamino]imidazole-4-carboxamide = 5-[(5-phospho-1-deoxy-D-ribulos-1-ylimino)methylamino]-1-(5-phospho-beta-D-ribosyl)imidazole-4-carboxamide. It participates in amino-acid biosynthesis; L-histidine biosynthesis; L-histidine from 5-phospho-alpha-D-ribose 1-diphosphate: step 4/9. The sequence is that of 1-(5-phosphoribosyl)-5-[(5-phosphoribosylamino)methylideneamino] imidazole-4-carboxamide isomerase from Prochlorococcus marinus (strain MIT 9211).